The chain runs to 870 residues: Alanine--tRNA ligase (870 aa).

The Zn(2+) site is built by H585, H589, C689, and H693.

The protein belongs to the class-II aminoacyl-tRNA synthetase family. Zn(2+) is required as a cofactor.

It localises to the cytoplasm. The enzyme catalyses tRNA(Ala) + L-alanine + ATP = L-alanyl-tRNA(Ala) + AMP + diphosphate. Catalyzes the attachment of alanine to tRNA(Ala) in a two-step reaction: alanine is first activated by ATP to form Ala-AMP and then transferred to the acceptor end of tRNA(Ala). Also edits incorrectly charged Ser-tRNA(Ala) and Gly-tRNA(Ala) via its editing domain. This chain is Alanine--tRNA ligase, found in Picrophilus torridus (strain ATCC 700027 / DSM 9790 / JCM 10055 / NBRC 100828 / KAW 2/3).